A 318-amino-acid chain; its full sequence is Lymphatic vessel endothelial hyaluronic acid receptor 1 (318 aa).

Positions 1 to 23 (MLQHTSLVLLLASIWTTRHPVQG) are cleaved as a signal peptide. Residues 24–234 (ADLVQDLSIS…EAAGFGGVPT (211 aa)) lie on the Extracellular side of the membrane. The 91-residue stretch at 39-129 (GVALVGRNKN…SQKFKAYCHN (91 aa)) folds into the Link domain. An N-linked (GlcNAc...) asparagine glycan is attached at N52. Cystine bridges form between C60/C127 and C84/C105. N-linked (GlcNAc...) asparagine glycosylation occurs at N129. A helical transmembrane segment spans residues 235-255 (ALLVLALLFFGAAAVLAVCYV). Over 256 to 318 (KRYVKAFPFT…TTVRCLEAEV (63 aa)) the chain is Cytoplasmic. The span at 284 to 305 (ADDVNANEESKKTIKNPEEAKS) shows a compositional bias: basic and acidic residues. The tract at residues 284–318 (ADDVNANEESKKTIKNPEEAKSPPKTTVRCLEAEV) is disordered.

As to quaternary structure, homodimer; disulfide-linked. Interacts with PDGFB and IGFBP3. Forms a transient ternary complex with PDGFB and PDGFRB in TGN. In terms of processing, O-glycosylated.

Its subcellular location is the membrane. Functionally, ligand-specific transporter trafficking between intracellular organelles (TGN) and the plasma membrane. Plays a role in autocrine regulation of cell growth mediated by growth regulators containing cell surface retention sequence binding (CRS). May act as a hyaluronan (HA) transporter, either mediating its uptake for catabolism within lymphatic endothelial cells themselves, or its transport into the lumen of afferent lymphatic vessels for subsequent re-uptake and degradation in lymph nodes. Binds to pericelluar hyaluronan matrices deposited on the surface of leukocytes and facilitates cell adhesion and migration through lymphatic endothelium. This is Lymphatic vessel endothelial hyaluronic acid receptor 1 (Lyve1) from Mus musculus (Mouse).